The following is a 317-amino-acid chain: Bile salt hydrolase/transferase (317 aa).

The active-site Nucleophile; acyl-thioester intermediate is the Cys2. Deoxycholate is bound by residues Cys2 and Arg18. A taurine-binding site is contributed by Asn82.

Belongs to the peptidase C59 family. Homotetramer. The tetramer consists of a dimer of dimers.

It catalyses the reaction glycocholate + H2O = cholate + glycine. It carries out the reaction glycodeoxycholate + H2O = deoxycholate + glycine. The enzyme catalyses chenodeoxycholate + glycine = glycochenodeoxycholate + H2O. The catalysed reaction is cholate + taurine = taurocholate + H2O. It catalyses the reaction taurodeoxycholate + H2O = deoxycholate + taurine. It carries out the reaction taurochenodeoxycholate + H2O = chenodeoxycholate + taurine. The enzyme catalyses an L-alpha-amino acid + cholate = an N-choloyl-L-alpha-amino acid + H2O. The catalysed reaction is an L-alpha-amino acid + taurocholate = an N-choloyl-L-alpha-amino acid + taurine. It catalyses the reaction cholate + L-alanine = L-alanocholate + H2O. It carries out the reaction taurocholate + L-alanine = L-alanocholate + taurine. The enzyme catalyses cholate + L-serine = L-serocholate + H2O. The catalysed reaction is taurocholate + L-serine = L-serocholate + taurine. It catalyses the reaction cholate + L-histidine = L-histidocholate + H2O. It carries out the reaction taurocholate + L-histidine = L-histidocholate + taurine. It participates in lipid metabolism; bile acid biosynthesis. Possesses dual functions in bile acid metabolism. Acts as a bile salt hydrolase that catalyzes the deconjugation of glycine- and taurine-linked bile salts, which occurs naturally in the intestines of humans, releasing amino acid residues and deconjugated bile salts (bile acids). Can hydrolyze the amide bond in all six major human conjugated bile salts, namely glycocholate (GCA), glycodeoxycholate (GDCA), glycochenodeoxycholate (GCDCA), taurocholate (TCA), taurodeoxycholate (TDCA) and taurochenodeoxycholate (TCDCA). Shows a slight preference for glycine-conjugated bile acids as substrates. Also acts as an amine N-acyltransferase that conjugates a wide variety of amino acids to conjugated and non-conjugated bile acids, thus producing bacterial bile acid amidates (BBAAs) - also named microbially conjugated bile acids (MCBAs) - in the gastrointestinal tract. These BBAAs may facilitate communication between the microbiota and host through the activation of human ligand-activated transcription factors. This chain is Bile salt hydrolase/transferase, found in Bifidobacterium longum subsp. longum (strain ATCC 15707 / DSM 20219 / JCM 1217 / NCTC 11818 / E194b).